A 68-amino-acid chain; its full sequence is Large ribosomal subunit protein bL31 (68 aa).

Residues cysteine 16, cysteine 18, cysteine 36, and cysteine 39 each contribute to the Zn(2+) site.

The protein belongs to the bacterial ribosomal protein bL31 family. Type A subfamily. As to quaternary structure, part of the 50S ribosomal subunit. Zn(2+) serves as cofactor.

Functionally, binds the 23S rRNA. The polypeptide is Large ribosomal subunit protein bL31 (Dictyoglomus thermophilum (strain ATCC 35947 / DSM 3960 / H-6-12)).